The following is a 107-amino-acid chain: uncharacterized protein (107 aa).

Residues 88 to 107 are disordered; sequence GSTPWGSGRQVNAARPIGGR.

Its subcellular location is the virion. This is an uncharacterized protein from Acanthamoeba polyphaga (Amoeba).